A 525-amino-acid chain; its full sequence is CBL-interacting protein kinase 21 (525 aa).

The Protein kinase domain maps to 87–342; the sequence is YEMGRALGEG…ITGIRAHEWF (256 aa). Residues 93 to 101 and K116 contribute to the ATP site; that span reads LGEGHFGKV. D210 serves as the catalytic Proton acceptor. An activation loop region spans residues 228–257; that stretch reads DFGLSALPQNQRKDGLLHTTCGSPNYIAPE. The region spanning 372–401 is the NAF domain; sequence DIETSPAISQINAFQLIGMSSCLDLSGFFE. The segment at 407 to 436 is PPI; sequence ERKIRFVSNYSPTSLFEKIESTVTEKGFQV.

It belongs to the protein kinase superfamily. CAMK Ser/Thr protein kinase family. SNF1 subfamily. Mn(2+) is required as a cofactor.

The enzyme catalyses L-seryl-[protein] + ATP = O-phospho-L-seryl-[protein] + ADP + H(+). It carries out the reaction L-threonyl-[protein] + ATP = O-phospho-L-threonyl-[protein] + ADP + H(+). Its function is as follows. CIPK serine-threonine protein kinases interact with CBL proteins. Binding of a CBL protein to the regulatory NAF domain of CIPK protein lead to the activation of the kinase in a calcium-dependent manner. This chain is CBL-interacting protein kinase 21 (CIPK21), found in Oryza sativa subsp. japonica (Rice).